The primary structure comprises 363 residues: NAD(P)H-quinone oxidoreductase subunit 1, chloroplastic (363 aa).

Helical transmembrane passes span 27–47, 98–118, 127–147, 248–268, 300–320, and 336–356; these read IWLL…VLVI, FSIG…VIPF, LSIG…GLLM, YSGI…LVSS, VFGT…FLFI, and LLNL…LLTT.

It belongs to the complex I subunit 1 family. As to quaternary structure, NDH is composed of at least 16 different subunits, 5 of which are encoded in the nucleus.

It is found in the plastid. The protein resides in the chloroplast thylakoid membrane. It carries out the reaction a plastoquinone + NADH + (n+1) H(+)(in) = a plastoquinol + NAD(+) + n H(+)(out). It catalyses the reaction a plastoquinone + NADPH + (n+1) H(+)(in) = a plastoquinol + NADP(+) + n H(+)(out). Functionally, NDH shuttles electrons from NAD(P)H:plastoquinone, via FMN and iron-sulfur (Fe-S) centers, to quinones in the photosynthetic chain and possibly in a chloroplast respiratory chain. The immediate electron acceptor for the enzyme in this species is believed to be plastoquinone. Couples the redox reaction to proton translocation, and thus conserves the redox energy in a proton gradient. The protein is NAD(P)H-quinone oxidoreductase subunit 1, chloroplastic of Platanus occidentalis (Sycamore).